The following is a 732-amino-acid chain: Serine/threonine-protein kinase CBK1 (732 aa).

The tract at residues 111–240 is disordered; that stretch reads SFDNHLNVDP…STEAANSDMT (130 aa). Polar residues predominate over residues 119–159; the sequence is DPNNTERFTSMDSMNFQPPASTFTQLGNGSSTNLSEISSGQ. Low complexity predominate over residues 160 to 171; that stretch reads NSLLSNHSVNNL. A compositionally biased stretch (polar residues) spans 172–183; that stretch reads PTALTSDTSPPV. Over residues 185-221 the composition is skewed to low complexity; sequence QHPQFQPQQQQQQQQPQQQQIFQQQQQQQQQQQQPQQ. The segment covering 222-240 has biased composition (polar residues); the sequence is SRAVVNQSVSTEAANSDMT. The stretch at 281-310 forms a coiled coil; sequence HAIERNQRRLELENKIANEDIGSSEERKNR. The 313-residue stretch at 335–647 folds into the Protein kinase domain; that stretch reads FHTVKVIGKG…AEEIKQHPFF (313 aa). Residues 341–349 and Lys364 contribute to the ATP site; that span reads IGKGAFGEV. The Proton acceptor role is filled by Asp458. An AGC-kinase C-terminal domain is found at 648-730; sequence RGVDWDSIRD…SRFDYLTRKN (83 aa).

Belongs to the protein kinase superfamily. STE Ser/Thr protein kinase family. COT1 subfamily. As to quaternary structure, interacts with MOB2 and BCR1.

The protein localises to the bud neck. The protein resides in the cell tip. The catalysed reaction is L-seryl-[protein] + ATP = O-phospho-L-seryl-[protein] + ADP + H(+). The enzyme catalyses L-threonyl-[protein] + ATP = O-phospho-L-threonyl-[protein] + ADP + H(+). Its function is as follows. Serine/threonine-protein kinase required for wild-type hyphal growth and transcriptional regulation of cell-wall-associated genes. Involved in the biofilm formation through phosphorylation of the master regulator of biofilm formation BCR1. The polypeptide is Serine/threonine-protein kinase CBK1 (CBK1) (Candida albicans (strain SC5314 / ATCC MYA-2876) (Yeast)).